A 613-amino-acid polypeptide reads, in one-letter code: Protein starmaker (613 aa).

The N-terminal stretch at 1 to 20 is a signal peptide; it reads MLSRTVFVPLILAFVGVSIS. Residues 42–613 form a disordered region; sequence FTVQFNVGTP…DGRKTSMPIS (572 aa). Composition is skewed to basic and acidic residues over residues 62 to 72, 117 to 132, 147 to 193, 206 to 284, and 291 to 449; these read DGKDSAEKNEA, SAEK…DKPD, DASH…KPEG, SAEK…KSDD, and DEQK…HSDS. A compositionally biased stretch (acidic residues) spans 450-465; the sequence is DSDSDSDSDSDSDSDS. 3 stretches are compositionally biased toward basic and acidic residues: residues 467–482, 509–521, and 538–554; these read SNSR…SSES, DKDS…KTDS, and DDSK…TAEK. A compositionally biased stretch (acidic residues) spans 555–573; the sequence is TDEDSHDVSDDDDDIDAHD. A compositionally biased stretch (basic and acidic residues) spans 574-607; it reads DEAGVEHGTDEASKPHQEPDHHDDTTHGSDDGRK.

It localises to the secreted. Its function is as follows. Essential for the formation of otoliths in the inner ear of developing larvae and for the perception of gravity and acceleration. May be one of the organic components of the ortholiths. The chain is Protein starmaker (stm) from Danio rerio (Zebrafish).